We begin with the raw amino-acid sequence, 561 residues long: Putative transport protein YbjL (561 aa).

A run of 5 helical transmembrane segments spans residues 8 to 28, 32 to 52, 66 to 86, 94 to 114, and 158 to 178; these read LLNG…LCLG, LGSV…LLGQ, FMLF…SIFF, MLAL…GKLF, and NLSL…IVGA. RCK C-terminal domains lie at 200 to 288 and 292 to 373; these read RGLD…SLRN and VFDR…RIGF. 5 helical membrane-spanning segments follow: residues 383–403, 406–426, 447–467, 475–495, and 540–560; these read LLAF…TFQF, FSFG…LGFL, FGLM…ISNG, MLIA…LFGA, and AIAN…WPGL.

It belongs to the AAE transporter (TC 2.A.81) family. YbjL subfamily.

The protein resides in the cell membrane. This Salmonella gallinarum (strain 287/91 / NCTC 13346) protein is Putative transport protein YbjL.